A 396-amino-acid polypeptide reads, in one-letter code: Beta-1,4-galactosyltransferase 3 (396 aa).

Residues 1–10 (MLRRLLERPC) lie on the Cytoplasmic side of the membrane. Residues 11-31 (TLALLVGSQLAVMMYLSLGGF) traverse the membrane as a helical; Signal-anchor for type II membrane protein segment. Residues 32 to 396 (RSLSALFGRE…ANHTAPHGSH (365 aa)) lie on the Lumenal side of the membrane. Asn57 carries N-linked (GlcNAc...) asparagine glycosylation. A disulfide bridge links Cys80 with Cys122. Residue 133-137 (PHRAR) coordinates UDP-alpha-D-galactose. An N-linked (GlcNAc...) asparagine glycan is attached at Asn169. Residues 172 to 174 (FNR), 199 to 200 (VD), Tyr229, and Trp261 each bind UDP-alpha-D-galactose. A disulfide bridge connects residues Cys193 and Cys212. Asp200 lines the Mn(2+) pocket. 263–266 (GEDD) contacts N-acetyl-D-glucosamine. Residue His294 participates in Mn(2+) binding. 294-296 (HRG) contributes to the UDP-alpha-D-galactose binding site. Arg306 lines the N-acetyl-D-glucosamine pocket. N-linked (GlcNAc...) asparagine glycosylation is present at Asn340. A disordered region spans residues 341–396 (ITADIGTDPRGPRTSSGPHYPPGSSQAFRQEMLQRRPPARPGPLPTANHTAPHGSH). Residues 353–368 (RTSSGPHYPPGSSQAF) are compositionally biased toward polar residues. A glycan (N-linked (GlcNAc...) asparagine) is linked at Asn388.

It belongs to the glycosyltransferase 7 family. Mn(2+) serves as cofactor.

The protein localises to the golgi apparatus. It is found in the golgi stack membrane. The enzyme catalyses an N-acetyl-beta-D-glucosaminyl derivative + UDP-alpha-D-galactose = a beta-D-galactosyl-(1-&gt;4)-N-acetyl-beta-D-glucosaminyl derivative + UDP + H(+). It catalyses the reaction N-acetyl-D-glucosamine + UDP-alpha-D-galactose = beta-D-galactosyl-(1-&gt;4)-N-acetyl-D-glucosamine + UDP + H(+). The catalysed reaction is a beta-D-GlcNAc-(1-&gt;3)-beta-D-Gal-(1-&gt;4)-beta-D-Glc-(1&lt;-&gt;1)-Cer(d18:1(4E)) + UDP-alpha-D-galactose = a neolactoside nLc4Cer(d18:1(4E)) + UDP + H(+). It carries out the reaction a beta-D-glucosylceramide + UDP-alpha-D-galactose = a beta-D-galactosyl-(1-&gt;4)-beta-D-glucosyl-(1&lt;-&gt;1)-ceramide + UDP + H(+). The enzyme catalyses a neolactoside IV(3)-beta-GlcNAc-nLc4Cer + UDP-alpha-D-galactose = a neolactoside nLc6Cer + UDP + H(+). Its pathway is protein modification; protein glycosylation. In terms of biological role, responsible for the synthesis of complex-type N-linked oligosaccharides in many glycoproteins as well as the carbohydrate moieties of glycolipids. This chain is Beta-1,4-galactosyltransferase 3 (B4GALT3), found in Bos taurus (Bovine).